Reading from the N-terminus, the 340-residue chain is Ketol-acid reductoisomerase (NADP(+)) (340 aa).

Residues 1–183 (MAVTVYYDKD…GAGRTGIIET (183 aa)) enclose the KARI N-terminal Rossmann domain. NADP(+) is bound by residues 26–29 (FGSQ), Lys-49, Ser-54, and 84–87 (DELQ). His-109 is a catalytic residue. Gly-135 is a binding site for NADP(+). Positions 184–329 (TFKDETETDL…EKLRAMMPWI (146 aa)) constitute a KARI C-terminal knotted domain. Mg(2+)-binding residues include Asp-192, Glu-196, Glu-228, and Glu-232. Ser-253 is a substrate binding site.

The protein belongs to the ketol-acid reductoisomerase family. The cofactor is Mg(2+).

The enzyme catalyses (2R)-2,3-dihydroxy-3-methylbutanoate + NADP(+) = (2S)-2-acetolactate + NADPH + H(+). It carries out the reaction (2R,3R)-2,3-dihydroxy-3-methylpentanoate + NADP(+) = (S)-2-ethyl-2-hydroxy-3-oxobutanoate + NADPH + H(+). It participates in amino-acid biosynthesis; L-isoleucine biosynthesis; L-isoleucine from 2-oxobutanoate: step 2/4. Its pathway is amino-acid biosynthesis; L-valine biosynthesis; L-valine from pyruvate: step 2/4. Involved in the biosynthesis of branched-chain amino acids (BCAA). Catalyzes an alkyl-migration followed by a ketol-acid reduction of (S)-2-acetolactate (S2AL) to yield (R)-2,3-dihydroxy-isovalerate. In the isomerase reaction, S2AL is rearranged via a Mg-dependent methyl migration to produce 3-hydroxy-3-methyl-2-ketobutyrate (HMKB). In the reductase reaction, this 2-ketoacid undergoes a metal-dependent reduction by NADPH to yield (R)-2,3-dihydroxy-isovalerate. The protein is Ketol-acid reductoisomerase (NADP(+)) of Campylobacter hominis (strain ATCC BAA-381 / DSM 21671 / CCUG 45161 / LMG 19568 / NCTC 13146 / CH001A).